The sequence spans 391 residues: Methyltransferase/ribosomally synthesized type I borosin cyclic peptide precursor cmaMA (391 aa).

Positions 1–253 are methyltransferase domain; sequence MDATANPKAG…TISTFYLPPK (253 aa). Catalysis depends on residues Arg-72, Tyr-76, and Tyr-98. 8 residues coordinate S-adenosyl-L-methionine: Tyr-98, His-100, Val-103, Ala-130, Gln-172, Ala-215, Ser-246, and Thr-247. Residues 254–373 are clasp domain; sequence APSAKVSLNR…AQLSGALKEG (120 aa). A precursor leader region spans residues 374 to 376; sequence GVP. Leu-382 is subject to N-methylleucine. An N-methylphenylalanine mark is found at Phe-385 and Phe-386. Residues Ile-387 and Ile-388 each carry the N-methylisoleucine modification.

The protein in the N-terminal section; belongs to the precorrin methyltransferase family. As to quaternary structure, homodimer. CmaMA automethylates at Leu-382, Phe-385, Phe-386, Ile-387 and Ile-388 before being processed by the prolyloligopeptidase ledP which likely forms a peptidyl ester upon removal of the follower propeptide, which then undergoes macrocyclization with the N-terminus of the modified core peptide. Peptide backbone alpha-N-methylations change the physicochemical properties of amide bonds to provide structural constraints and other favorable characteristics including biological membrane permeability to peptides.

It functions in the pathway secondary metabolite biosynthesis. Its function is as follows. Fusion protein of the methyltransferase cmaM and a type I borosin core peptide; part of the gene cluster that mediates the biosynthesis of a type I borosin, a highly methylated cyclic peptide with potent biological activities. Type I borosins derive from the C-terminus of the fusion protein, and it is the same protein that methylates its own C-terminus using S-adenosyl methionine (SAM). The C-terminus is subsequently cleaved off and macrocyclized by a prolyloligopeptidase to give the final product. In Coprinopsis marcescibilis (Agaric fungus), this protein is Methyltransferase/ribosomally synthesized type I borosin cyclic peptide precursor cmaMA.